Consider the following 296-residue polypeptide: Phosphoribosylaminoimidazole-succinocarboxamide synthase (296 aa).

This sequence belongs to the SAICAR synthetase family.

It catalyses the reaction 5-amino-1-(5-phospho-D-ribosyl)imidazole-4-carboxylate + L-aspartate + ATP = (2S)-2-[5-amino-1-(5-phospho-beta-D-ribosyl)imidazole-4-carboxamido]succinate + ADP + phosphate + 2 H(+). Its pathway is purine metabolism; IMP biosynthesis via de novo pathway; 5-amino-1-(5-phospho-D-ribosyl)imidazole-4-carboxamide from 5-amino-1-(5-phospho-D-ribosyl)imidazole-4-carboxylate: step 1/2. The protein is Phosphoribosylaminoimidazole-succinocarboxamide synthase of Desulfotalea psychrophila (strain LSv54 / DSM 12343).